Here is a 317-residue protein sequence, read N- to C-terminus: D-aminoacyl-tRNA deacylase (317 aa).

The protein belongs to the DtdA deacylase family. Zn(2+) is required as a cofactor. Ubiquitous.

It is found in the nucleus. It localises to the cytoplasm. The catalysed reaction is a D-aminoacyl-tRNA + H2O = a tRNA + a D-alpha-amino acid + H(+). It carries out the reaction glycyl-tRNA(Ala) + H2O = tRNA(Ala) + glycine + H(+). Functionally, hydrolyzes D-aminoacyl-tRNA into D-amino acid and free tRNA. Broad specificity toward the amino acid, but strict specificity toward the D-isomer. Seems to be required for ethanol tolerance. The protein is D-aminoacyl-tRNA deacylase (GEK1) of Arabidopsis thaliana (Mouse-ear cress).